The following is a 33-amino-acid chain: Photosystem II reaction center protein Psb30 (33 aa).

The chain crosses the membrane as a helical span at residues 5–25 (VIAQLIALALIVGSGPLVIAL).

It belongs to the Psb30/Ycf12 family. As to quaternary structure, PSII is composed of 1 copy each of membrane proteins PsbA, PsbB, PsbC, PsbD, PsbE, PsbF, PsbH, PsbI, PsbJ, PsbK, PsbL, PsbM, PsbT, PsbX, PsbY, PsbZ, Psb30/Ycf12, peripheral proteins of the oxygen-evolving complex and a large number of cofactors. It forms dimeric complexes.

The protein resides in the plastid. It is found in the chloroplast thylakoid membrane. In terms of biological role, a core subunit of photosystem II (PSII), probably helps stabilize the reaction center. The chain is Photosystem II reaction center protein Psb30 from Physcomitrium patens (Spreading-leaved earth moss).